Consider the following 493-residue polypeptide: UDP-N-acetylmuramate--L-alanine ligase (493 aa).

ATP is bound at residue 112-118; the sequence is GTHGKTT.

This sequence belongs to the MurCDEF family.

It localises to the cytoplasm. It catalyses the reaction UDP-N-acetyl-alpha-D-muramate + L-alanine + ATP = UDP-N-acetyl-alpha-D-muramoyl-L-alanine + ADP + phosphate + H(+). The protein operates within cell wall biogenesis; peptidoglycan biosynthesis. Its function is as follows. Cell wall formation. In Nitrosospira multiformis (strain ATCC 25196 / NCIMB 11849 / C 71), this protein is UDP-N-acetylmuramate--L-alanine ligase.